We begin with the raw amino-acid sequence, 161 residues long: Low molecular weight phosphotyrosine protein phosphatase (161 aa).

Cys-14 acts as the Nucleophile in catalysis. Catalysis depends on Arg-20, which acts as the Transition state stabilizer. Ser-57 carries the post-translational modification Phosphoserine. Catalysis depends on Asp-133, which acts as the Proton donor.

It belongs to the low molecular weight phosphotyrosine protein phosphatase family.

Its subcellular location is the cytoplasm. It catalyses the reaction O-phospho-L-tyrosyl-[protein] + H2O = L-tyrosyl-[protein] + phosphate. It carries out the reaction a phosphate monoester + H2O = an alcohol + phosphate. Acts on tyrosine phosphorylated proteins, low-MW aryl phosphates and natural and synthetic acyl phosphates. This Saccharomyces cerevisiae (strain ATCC 204508 / S288c) (Baker's yeast) protein is Low molecular weight phosphotyrosine protein phosphatase.